The chain runs to 415 residues: Putative competence-damage inducible protein (415 aa).

The protein belongs to the CinA family.

The chain is Putative competence-damage inducible protein from Listeria innocua serovar 6a (strain ATCC BAA-680 / CLIP 11262).